The primary structure comprises 201 residues: tRNA (guanine-N(7)-)-methyltransferase (201 aa).

S-adenosyl-L-methionine contacts are provided by Glu33, Glu58, Asp85, and Asp106. Asp106 is a catalytic residue. Residues Lys110, Asp142, and 180-183 (TTYE) contribute to the substrate site.

The protein belongs to the class I-like SAM-binding methyltransferase superfamily. TrmB family.

It catalyses the reaction guanosine(46) in tRNA + S-adenosyl-L-methionine = N(7)-methylguanosine(46) in tRNA + S-adenosyl-L-homocysteine. Its pathway is tRNA modification; N(7)-methylguanine-tRNA biosynthesis. Catalyzes the formation of N(7)-methylguanine at position 46 (m7G46) in tRNA. This is tRNA (guanine-N(7)-)-methyltransferase from Mesomycoplasma hyopneumoniae (strain 232) (Mycoplasma hyopneumoniae).